A 466-amino-acid chain; its full sequence is Hydroxyacid-oxoacid transhydrogenase, mitochondrial (466 aa).

Lys444 carries the post-translational modification N6-acetyllysine. Ser451 carries the phosphoserine modification.

Belongs to the iron-containing alcohol dehydrogenase family. Hydroxyacid-oxoacid transhydrogenase subfamily.

It localises to the mitochondrion. The catalysed reaction is (S)-3-hydroxybutanoate + 2-oxoglutarate = (R)-2-hydroxyglutarate + acetoacetate. It catalyses the reaction 4-hydroxybutanoate + 2-oxoglutarate = (R)-2-hydroxyglutarate + succinate semialdehyde. Functionally, catalyzes the cofactor-independent reversible oxidation of gamma-hydroxybutyrate (GHB) to succinic semialdehyde (SSA) coupled to reduction of 2-ketoglutarate (2-KG) to D-2-hydroxyglutarate (D-2-HG). L-3-hydroxybutyrate (L-3-OHB) is also a substrate for HOT when using 2-KG as hydrogen acceptor, resulting in the formation of D-2-HG. The polypeptide is Hydroxyacid-oxoacid transhydrogenase, mitochondrial (ADHFE1) (Bos taurus (Bovine)).